Reading from the N-terminus, the 427-residue chain is 3-phosphoshikimate 1-carboxyvinyltransferase (427 aa).

K22, S23, and R27 together coordinate 3-phosphoshikimate. K22 is a phosphoenolpyruvate binding site. Phosphoenolpyruvate contacts are provided by G96 and R124. 3-phosphoshikimate contacts are provided by S169, S170, Q171, S197, D313, N336, and K340. Q171 serves as a coordination point for phosphoenolpyruvate. The Proton acceptor role is filled by D313. Phosphoenolpyruvate is bound by residues R344, R386, and K411.

The protein belongs to the EPSP synthase family. In terms of assembly, monomer.

The protein localises to the cytoplasm. The catalysed reaction is 3-phosphoshikimate + phosphoenolpyruvate = 5-O-(1-carboxyvinyl)-3-phosphoshikimate + phosphate. It functions in the pathway metabolic intermediate biosynthesis; chorismate biosynthesis; chorismate from D-erythrose 4-phosphate and phosphoenolpyruvate: step 6/7. In terms of biological role, catalyzes the transfer of the enolpyruvyl moiety of phosphoenolpyruvate (PEP) to the 5-hydroxyl of shikimate-3-phosphate (S3P) to produce enolpyruvyl shikimate-3-phosphate and inorganic phosphate. The chain is 3-phosphoshikimate 1-carboxyvinyltransferase from Klebsiella pneumoniae subsp. pneumoniae (strain ATCC 700721 / MGH 78578).